Here is a 391-residue protein sequence, read N- to C-terminus: Elongation factor Tu (391 aa).

A tr-type G domain is found at 10–201 (KPHVNIGTIG…AVDDYIPTPE (192 aa)). Residues 19-26 (GHVDHGKT) form a G1 region. 19 to 26 (GHVDHGKT) provides a ligand contact to GTP. Thr-26 provides a ligand contact to Mg(2+). The tract at residues 55–59 (GITIS) is G2. Residues 76-79 (DCPG) form a G3 region. Residues 76-80 (DCPGH) and 131-134 (NKCD) each bind GTP. The tract at residues 131 to 134 (NKCD) is G4. The tract at residues 169–171 (SAL) is G5.

This sequence belongs to the TRAFAC class translation factor GTPase superfamily. Classic translation factor GTPase family. EF-Tu/EF-1A subfamily. Monomer.

Its subcellular location is the cytoplasm. The catalysed reaction is GTP + H2O = GDP + phosphate + H(+). Functionally, GTP hydrolase that promotes the GTP-dependent binding of aminoacyl-tRNA to the A-site of ribosomes during protein biosynthesis. This is Elongation factor Tu from Brucella anthropi (strain ATCC 49188 / DSM 6882 / CCUG 24695 / JCM 21032 / LMG 3331 / NBRC 15819 / NCTC 12168 / Alc 37) (Ochrobactrum anthropi).